A 166-amino-acid polypeptide reads, in one-letter code: D-aminoacyl-tRNA deacylase (166 aa).

Residues 142-143 carry the Gly-cisPro motif, important for rejection of L-amino acids motif; it reads GP.

This sequence belongs to the DTD family. In terms of assembly, homodimer.

Its subcellular location is the cytoplasm. The catalysed reaction is glycyl-tRNA(Ala) + H2O = tRNA(Ala) + glycine + H(+). The enzyme catalyses a D-aminoacyl-tRNA + H2O = a tRNA + a D-alpha-amino acid + H(+). Functionally, an aminoacyl-tRNA editing enzyme that deacylates mischarged D-aminoacyl-tRNAs. Also deacylates mischarged glycyl-tRNA(Ala), protecting cells against glycine mischarging by AlaRS. Acts via tRNA-based rather than protein-based catalysis; rejects L-amino acids rather than detecting D-amino acids in the active site. By recycling D-aminoacyl-tRNA to D-amino acids and free tRNA molecules, this enzyme counteracts the toxicity associated with the formation of D-aminoacyl-tRNA entities in vivo and helps enforce protein L-homochirality. The polypeptide is D-aminoacyl-tRNA deacylase (Ralstonia nicotianae (strain ATCC BAA-1114 / GMI1000) (Ralstonia solanacearum)).